The chain runs to 240 residues: Ribose-5-phosphate isomerase A (240 aa).

Substrate contacts are provided by residues 41 to 44 (TGST), 94 to 97 (DGAD), and 107 to 110 (KGGG). Glu116 functions as the Proton acceptor in the catalytic mechanism. Residue Lys134 participates in substrate binding.

Belongs to the ribose 5-phosphate isomerase family. In terms of assembly, homodimer.

The catalysed reaction is aldehydo-D-ribose 5-phosphate = D-ribulose 5-phosphate. The protein operates within carbohydrate degradation; pentose phosphate pathway; D-ribose 5-phosphate from D-ribulose 5-phosphate (non-oxidative stage): step 1/1. Its function is as follows. Catalyzes the reversible conversion of ribose-5-phosphate to ribulose 5-phosphate. The chain is Ribose-5-phosphate isomerase A from Polaromonas sp. (strain JS666 / ATCC BAA-500).